We begin with the raw amino-acid sequence, 292 residues long: Formamidopyrimidine-DNA glycosylase (292 aa).

The active-site Schiff-base intermediate with DNA is the Pro-2. Catalysis depends on Glu-3, which acts as the Proton donor. Catalysis depends on Lys-61, which acts as the Proton donor; for beta-elimination activity. DNA-binding residues include His-96, Arg-115, and Lys-161. The segment at 247-281 adopts an FPG-type zinc-finger fold; that stretch reads SAYGQEDRPCPRCGTAIRREKFMNRSSFSCPKCQP. The active-site Proton donor; for delta-elimination activity is Arg-271.

This sequence belongs to the FPG family. Monomer. Zn(2+) serves as cofactor.

The catalysed reaction is Hydrolysis of DNA containing ring-opened 7-methylguanine residues, releasing 2,6-diamino-4-hydroxy-5-(N-methyl)formamidopyrimidine.. The enzyme catalyses 2'-deoxyribonucleotide-(2'-deoxyribose 5'-phosphate)-2'-deoxyribonucleotide-DNA = a 3'-end 2'-deoxyribonucleotide-(2,3-dehydro-2,3-deoxyribose 5'-phosphate)-DNA + a 5'-end 5'-phospho-2'-deoxyribonucleoside-DNA + H(+). Involved in base excision repair of DNA damaged by oxidation or by mutagenic agents. Acts as a DNA glycosylase that recognizes and removes damaged bases. Has a preference for oxidized purines, such as 7,8-dihydro-8-oxoguanine (8-oxoG). Has AP (apurinic/apyrimidinic) lyase activity and introduces nicks in the DNA strand. Cleaves the DNA backbone by beta-delta elimination to generate a single-strand break at the site of the removed base with both 3'- and 5'-phosphates. The polypeptide is Formamidopyrimidine-DNA glycosylase (Rhodococcus jostii (strain RHA1)).